We begin with the raw amino-acid sequence, 88 residues long: Large ribosomal subunit protein bL31B (88 aa).

It belongs to the bacterial ribosomal protein bL31 family. Type B subfamily. As to quaternary structure, part of the 50S ribosomal subunit.

This is Large ribosomal subunit protein bL31B from Paraburkholderia xenovorans (strain LB400).